The sequence spans 487 residues: Keratin, type I cytoskeletal 12 (487 aa).

The segment at 1-118 (MSLSVCTSAL…GNDGGLLSGS (118 aa)) is head. Positions 119 to 154 (EKETMQNLNDRLASYLGKVRSLEEANAELENKIREW) are coil 1A. An IF rod domain is found at 119-433 (EKETMQNLND…RLLEGDSQGD (315 aa)). The segment at 158-175 (RRTRDAGSQSDYSKYYPL) is linker 1. The interval 176 to 267 (IEDLKNKIVS…KNHEEELQSF (92 aa)) is coil 1B. Residues 268–290 (QAGGPGEVNVEMDAAPGVDLTKV) are linker 12. The interval 291-428 (LNEMRAQYEA…IETYRRLLEG (138 aa)) is coil 2. The interval 428–461 (GDSQGDGFDESSSLSVSKPQTPSVDSSKDPNKTR) is disordered. A tail region spans residues 429 to 487 (DSQGDGFDESSSLSVSKPQTPSVDSSKDPNKTRKIKTVVQEIVNGEVVSSQVQELEEEM). Over residues 437-452 (ESSSLSVSKPQTPSVD) the composition is skewed to polar residues.

The protein belongs to the intermediate filament family. As to quaternary structure, heterotetramer of two type I and two type II keratins. Keratin-3 associates with keratin-12. As to expression, expressed in the corneal epithelium (at protein level). Also expressed in the suprabasal limbal epithelium of the cornea (at protein level).

Involved in corneal epithelium organization, integrity and corneal keratin expression. The sequence is that of Keratin, type I cytoskeletal 12 (Krt12) from Mus musculus (Mouse).